The sequence spans 431 residues: Tol-Pal system protein TolB (431 aa).

Positions 1 to 19 (MKRLLFFLICVFFSKTSYS) are cleaved as a signal peptide.

The protein belongs to the TolB family. In terms of assembly, the Tol-Pal system is composed of five core proteins: the inner membrane proteins TolA, TolQ and TolR, the periplasmic protein TolB and the outer membrane protein Pal. They form a network linking the inner and outer membranes and the peptidoglycan layer.

It localises to the periplasm. Part of the Tol-Pal system, which plays a role in outer membrane invagination during cell division and is important for maintaining outer membrane integrity. TolB occupies a key intermediary position in the Tol-Pal system because it communicates directly with both membrane-embedded components, Pal in the outer membrane and TolA in the inner membrane. This Wigglesworthia glossinidia brevipalpis protein is Tol-Pal system protein TolB.